Here is a 181-residue protein sequence, read N- to C-terminus: uncharacterized protein (181 aa).

A run of 4 helical transmembrane segments spans residues 3-23, 67-87, 92-112, and 159-179; these read LSQTALFIGSIINLNALVLIL, ALLLIFIIGMLKGIIYFGLSV, VLGVLTVLKSIGLAIFYVLFI, and MFILLFLNNFMLDLLGGLWII.

The protein belongs to the YggT family.

It localises to the cell membrane. This is an uncharacterized protein from Haemophilus influenzae (strain ATCC 51907 / DSM 11121 / KW20 / Rd).